Consider the following 219-residue polypeptide: Thiamine-phosphate synthase (219 aa).

Residues 44 to 48 (QFREK) and Asn79 each bind 4-amino-2-methyl-5-(diphosphooxymethyl)pyrimidine. 2 residues coordinate Mg(2+): Asp80 and Asp99. Ser117 contributes to the 4-amino-2-methyl-5-(diphosphooxymethyl)pyrimidine binding site. 143 to 145 (TST) is a binding site for 2-[(2R,5Z)-2-carboxy-4-methylthiazol-5(2H)-ylidene]ethyl phosphate. Lys146 contributes to the 4-amino-2-methyl-5-(diphosphooxymethyl)pyrimidine binding site. Residues Gly175 and 195–196 (IS) each bind 2-[(2R,5Z)-2-carboxy-4-methylthiazol-5(2H)-ylidene]ethyl phosphate.

The protein belongs to the thiamine-phosphate synthase family. It depends on Mg(2+) as a cofactor.

It catalyses the reaction 2-[(2R,5Z)-2-carboxy-4-methylthiazol-5(2H)-ylidene]ethyl phosphate + 4-amino-2-methyl-5-(diphosphooxymethyl)pyrimidine + 2 H(+) = thiamine phosphate + CO2 + diphosphate. The enzyme catalyses 2-(2-carboxy-4-methylthiazol-5-yl)ethyl phosphate + 4-amino-2-methyl-5-(diphosphooxymethyl)pyrimidine + 2 H(+) = thiamine phosphate + CO2 + diphosphate. It carries out the reaction 4-methyl-5-(2-phosphooxyethyl)-thiazole + 4-amino-2-methyl-5-(diphosphooxymethyl)pyrimidine + H(+) = thiamine phosphate + diphosphate. The protein operates within cofactor biosynthesis; thiamine diphosphate biosynthesis; thiamine phosphate from 4-amino-2-methyl-5-diphosphomethylpyrimidine and 4-methyl-5-(2-phosphoethyl)-thiazole: step 1/1. In terms of biological role, condenses 4-methyl-5-(beta-hydroxyethyl)thiazole monophosphate (THZ-P) and 2-methyl-4-amino-5-hydroxymethyl pyrimidine pyrophosphate (HMP-PP) to form thiamine monophosphate (TMP). The polypeptide is Thiamine-phosphate synthase (Bacillus cereus (strain ATCC 14579 / DSM 31 / CCUG 7414 / JCM 2152 / NBRC 15305 / NCIMB 9373 / NCTC 2599 / NRRL B-3711)).